The following is a 620-amino-acid chain: Cryptochrome-1 (620 aa).

Residues 3 to 132 (VNAVHWFRKG…EVIVRISHTL (130 aa)) form the Photolyase/cryptochrome alpha/beta domain. 3 consecutive short sequence motifs (LIR) follow at residues 50-54 (NRWRF), 82-87 (DVFPRL), and 151-156 (KRFQTL). S252 provides a ligand contact to FAD. Short sequence motifs (LIR) lie at residues 255–260 (LRFGCL), 271–276 (DLYKKV), 285–290 (SLYGQL), and 335–339 (TGFPW). Q289 contributes to the FAD binding site. FAD is bound at residue H355. The short motif at 379-384 (KVFEEL) is the LIR 8 element. 387 to 389 (DAD) is an FAD binding site. 5 consecutive short sequence motifs (LIR) follow at residues 395 to 400 (GSWMWL), 411 to 416 (HCYCPV), 430 to 435 (RRYLPV), 486 to 491 (QIYQQL), and 492 to 497 (SRYRGL). Residues 593-620 (TGISAGKRPNPEEETQSVGPKVQRQSTN) are disordered.

Belongs to the DNA photolyase class-1 family. Component of the circadian core oscillator, which includes the CRY proteins, CLOCK or NPAS2, BMAL1 or BMAL2, CSNK1E, and the PER proteins. FAD is required as a cofactor. (6R)-5,10-methylene-5,6,7,8-tetrahydrofolate serves as cofactor. Expressed in the retina.

It localises to the cytoplasm. It is found in the nucleus. In terms of biological role, transcriptional repressor which forms a core component of the circadian clock. The circadian clock, an internal time-keeping system, regulates various physiological processes through the generation of approximately 24 hour circadian rhythms in gene expression, which are translated into rhythms in metabolism and behavior. It is derived from the Latin roots 'circa' (about) and 'diem' (day) and acts as an important regulator of a wide array of physiological functions including metabolism, sleep, body temperature, blood pressure, endocrine, immune, cardiovascular, and renal function. Consists of two major components: the central clock, residing in the suprachiasmatic nucleus (SCN) of the brain, and the peripheral clocks that are present in nearly every tissue and organ system. Both the central and peripheral clocks can be reset by environmental cues, also known as Zeitgebers (German for 'timegivers'). The predominant Zeitgeber for the central clock is light, which is sensed by retina and signals directly to the SCN. The central clock entrains the peripheral clocks through neuronal and hormonal signals, body temperature and feeding-related cues, aligning all clocks with the external light/dark cycle. Circadian rhythms allow an organism to achieve temporal homeostasis with its environment at the molecular level by regulating gene expression to create a peak of protein expression once every 24 hours to control when a particular physiological process is most active with respect to the solar day. Transcription and translation of core clock components (CLOCK, NPAS2, BMAL1, BMAL2, PER1, PER2, PER3, CRY1 and CRY2) plays a critical role in rhythm generation, whereas delays imposed by post-translational modifications (PTMs) are important for determining the period (tau) of the rhythms (tau refers to the period of a rhythm and is the length, in time, of one complete cycle). A diurnal rhythm is synchronized with the day/night cycle, while the ultradian and infradian rhythms have a period shorter and longer than 24 hours, respectively. Disruptions in the circadian rhythms contribute to the pathology of cardiovascular diseases, cancer, metabolic syndromes and aging. A transcription/translation feedback loop (TTFL) forms the core of the molecular circadian clock mechanism. Transcription factors, CLOCK or NPAS2 and BMAL1 or BMAL2, form the positive limb of the feedback loop, act in the form of a heterodimer and activate the transcription of core clock genes and clock-controlled genes (involved in key metabolic processes), harboring E-box elements (5'-CACGTG-3') within their promoters. The core clock genes: PER1/2/3 and CRY1/2 which are transcriptional repressors form the negative limb of the feedback loop and interact with the CLOCK|NPAS2-BMAL1|BMAL2 heterodimer inhibiting its activity and thereby negatively regulating their own expression. This heterodimer also activates nuclear receptors NR1D1/2 and RORA/B/G, which form a second feedback loop and which activate and repress BMAL1 transcription, respectively. CRY1 and CRY2 have redundant functions but also differential and selective contributions at least in defining the pace of the SCN circadian clock and its circadian transcriptional outputs. More potent transcriptional repressor in cerebellum and liver than CRY2, though more effective in lengthening the period of the SCN oscillator. On its side, CRY2 seems to play a critical role in tuning SCN circadian period by opposing the action of CRY1. With CRY2, is dispensable for circadian rhythm generation but necessary for the development of intercellular networks for rhythm synchrony. Capable of translocating circadian clock core proteins such as PER proteins to the nucleus. Interacts with CLOCK-BMAL1 independently of PER proteins and is found at CLOCK-BMAL1-bound sites, suggesting that CRY may act as a molecular gatekeeper to maintain CLOCK-BMAL1 in a poised and repressed state until the proper time for transcriptional activation. This chain is Cryptochrome-1 (CRY1), found in Erithacus rubecula (European robin).